We begin with the raw amino-acid sequence, 308 residues long: Ribonuclease H2 subunit B (308 aa).

Position 2 is an N-acetylalanine (alanine 2). Lysine 292 is modified (N6-acetyllysine). Residue serine 293 is modified to Phosphoserine.

This sequence belongs to the RNase H2 subunit B family. In terms of assembly, the RNase H2 complex is a heterotrimer composed of the catalytic subunit RNASEH2A and the non-catalytic subunits RNASEH2B and RNASEH2C.

The protein resides in the nucleus. Its function is as follows. Non catalytic subunit of RNase H2, an endonuclease that specifically degrades the RNA of RNA:DNA hybrids. Participates in DNA replication, possibly by mediating the removal of lagging-strand Okazaki fragment RNA primers during DNA replication. Mediates the excision of single ribonucleotides from DNA:RNA duplexes. The sequence is that of Ribonuclease H2 subunit B (Rnaseh2b) from Mus musculus (Mouse).